Here is a 314-residue protein sequence, read N- to C-terminus: Glutathione synthetase (314 aa).

An ATP-grasp domain is found at Glu125 to Glu311. Phe151 to Gly208 lines the ATP pocket. Residues Glu282 and Asn284 each contribute to the Mg(2+) site.

Belongs to the prokaryotic GSH synthase family. Requires Mg(2+) as cofactor. Mn(2+) serves as cofactor.

It catalyses the reaction gamma-L-glutamyl-L-cysteine + glycine + ATP = glutathione + ADP + phosphate + H(+). Its pathway is sulfur metabolism; glutathione biosynthesis; glutathione from L-cysteine and L-glutamate: step 2/2. This is Glutathione synthetase from Xylella fastidiosa (strain Temecula1 / ATCC 700964).